The sequence spans 1165 residues: MAASSSSTGLPPQHQVFINFRGEDLRLGFVSHLVEALENDNIKVFIDNYADKGEPLETLLTKIHDSKIALAIFSGKYTESTWCLRELAMIKDCVEKGKLVAIPIFYKVDPSTVRGVRGQFGDAFRDLEERDVIKKKEWKQALKWIPGLIGITVHDKSPESEILNEIVKEVKKVLKKVSLEGSQKVVSVDPSQSIDTLSSVGGEKDKTFGIKQRLKELEEKLDLVKYKGTRVIGVVGMPGIGKTTLVKELYKTWQGKFSRYALIDQIRGKSNNFRLECLPTLLLEKLLPELNNPQLDSIEEPYKTHKGLLRERKVLVVLDDVSRREQIYALLGKYDLHSKHEWIKDGSRIIIATNDISSLKGLVHDTYVVRQLNHRDGLQLFRYHAFHYDQATPPKVDFMKLSDEFVHYARGHPLALKILGRELYEKNMKHWETKLIILAQSPTTYIGEVVQVSYDELSLAQKDAFLDIACFRSQDVDYVESLLVSSDPGSAEAIKALKNKFLIDTCDGRVEMHDLLYRFSRELDLKASTQGGSKQRRLWVRQDIINVQQKTMGAANVRGIFLDLSEVKVETSLDREHFKNMRNLRYLKLYNSHCPHECLTNNKINMPDGLELPLKEVRCLHWLKFPLEELPNDFDPINLVDLKLPYSEIERLWDGVKDTPVLKWVDLNHSSKLCSLSGLSKAQNLQRLNLEGCTSLESLRDVNLTSLKTLTLSNCSNFKEFPLIPENLKALYLDGTSISQLPDNVGNLKRLVLLNMKDCKVLETIPTCVSELKTLQKLVLSGCSKLKEFPEINKSSLKILLLDGTSIKTMPQLPSVQYLCLSRNDHLIYLPAGINQVSQLTRLDLKYCTKLTYVPELPPTLQYLDAHGCSSLKNVAKPLARIMSTVQNHYTFNFTNCGNLEQAAKEEITSYAQRKCQLLSDARKHYNEGSEALFSTCFPGCEVPSWFGHEAVGSLLQRKLLPHWHDKRLSGIALCAVVSFPDSQDQLSCFSVTCTFKIKAEDKSWVPFTCPVGIWTREGNKKDRIESDHVFIAYISSPHSIRCLEEKNSDKCNFSEASLEFTVTSDTSGIGVFKVLKCGLSLVYENDKNKNSSLEAKYDVPVEVSFQEPEHGIMEEERYINKRRSDDRRPKKKRKTKRDDIMIISTVTQTCVPSVNARIEDKVTG.

A TIR domain is found at 12 to 174 (PQHQVFINFR…EIVKEVKKVL (163 aa)). The active site involves glutamate 86. Positions 211-474 (KQRLKELEEK…FLDIACFRSQ (264 aa)) constitute an NB-ARC domain. One copy of the LRR 1 repeat lies at 592 to 613 (SHCPHECLTNNKINMPDGLELP). The LRR 2; degenerate repeat unit spans residues 614-635 (LKEVRCLHWLKFPLEELPNDFD). 6 LRR repeats span residues 636-659 (PINL…VKDT), 684-703 (NLQR…RDVN), 704-725 (LTSL…PLIP), 726-748 (ENLK…VGNL), 772-794 (LKTL…EINK), and 795-818 (SSLK…SVQY). An LRR 9; degenerate repeat occupies 819-836 (LCLSRNDHLIYLPAGINQ). Residues 837-863 (VSQLTRLDLKYCTKLTYVPELPPTLQY) form an LRR 10 repeat.

Belongs to the disease resistance TIR-NB-LRR family. In terms of assembly, interacts with RRS1B. RPS4B-RRS1B heterodimer interacts with the bacterial effectors AvrRps4 and PopP2.

It is found in the nucleus. The catalysed reaction is NAD(+) + H2O = ADP-D-ribose + nicotinamide + H(+). In terms of biological role, disease resistance (R) protein that specifically recognizes the AvrRps4 type III effector avirulence protein from P.syringae. Heterodimerization with RRS1B is required to form a functional complex to recognize AvrRps4 and to mediate the hypersensitive response. The sequence is that of Disease resistance protein RPS4B from Arabidopsis thaliana (Mouse-ear cress).